Consider the following 93-residue polypeptide: Class II hydrophobin 1 (93 aa).

An N-terminal signal peptide occupies residues 1–16 (MKFFAVAALFVASAMA). 4 cysteine pairs are disulfide-bonded: Cys24–Cys74, Cys35–Cys65, Cys36–Cys48, and Cys75–Cys86.

It belongs to the cerato-ulmin hydrophobin family. As to quaternary structure, interacts with maize ubiquilin 1-like (UBL) protein. Homotetramer. Further self-assembles to form highly ordered films at water-air interfaces through intermolecular interactions.

The protein localises to the cell membrane. In terms of biological role, aerial growth, conidiation, and dispersal of filamentous fungi in the environment rely upon a capability of their secreting small amphipathic proteins called hydrophobins (HPBs) with low sequence identity. Class I can self-assemble into an outermost layer of rodlet bundles on aerial cell surfaces, conferring cellular hydrophobicity that supports fungal growth, development and dispersal; whereas Class II form highly ordered films at water-air interfaces through intermolecular interactions but contribute nothing to the rodlet structure. Hyd1 is a class II hydrophobin that acts as an elicitor of induced systemic resistance (ISR) in plants. During interaction with the plant, binds with the maize target protein UBL in order to recruit more UBL proteins in maize roots to elicit plant defense responses, including cell death as well as brassinosteroid, jasmonate (JA) and ethylene (ET) signaling. This is Class II hydrophobin 1 from Trichoderma harzianum (Hypocrea lixii).